A 296-amino-acid polypeptide reads, in one-letter code: MEQFRNIGIIGRLGSSQVLDTIRRLKKFLLDRHLHVILEDTIAEVLPGHGLQTSTRKLLGEVCDLVIVVGGDGSLLGAARALARHNIPVLGINRGNLGFLTDIRPDELEEKVAQVLDGHYLVENRFLLQAEVRRHHEAIGQGDALNDVVLHPGKSTRMIEFEIYIDGQFVCSQKADGLIVATPTGSTAYALSAGGPIMHPKLDAIVIVPMYPHTLSGRPIVVDGNSELKIVVSKDLQIYPQVSCDGQNHFTCAPGDTITVSKKPQKLRLIHPLDHNYYEVCRTKLGWGSRLGSRDD.

Catalysis depends on Asp72, which acts as the Proton acceptor. NAD(+) contacts are provided by residues 72–73, 146–147, Arg157, Lys174, Asp176, 187–192, and Gln247; these read DG, ND, and TAYALS.

The protein belongs to the NAD kinase family. It depends on a divalent metal cation as a cofactor.

It localises to the cytoplasm. It carries out the reaction NAD(+) + ATP = ADP + NADP(+) + H(+). Functionally, involved in the regulation of the intracellular balance of NAD and NADP, and is a key enzyme in the biosynthesis of NADP. Catalyzes specifically the phosphorylation on 2'-hydroxyl of the adenosine moiety of NAD to yield NADP. This chain is NAD kinase, found in Pseudomonas putida (strain GB-1).